The primary structure comprises 120 residues: Ribonuclease P protein component (120 aa).

This sequence belongs to the RnpA family. In terms of assembly, consists of a catalytic RNA component (M1 or rnpB) and a protein subunit.

The enzyme catalyses Endonucleolytic cleavage of RNA, removing 5'-extranucleotides from tRNA precursor.. Functionally, RNaseP catalyzes the removal of the 5'-leader sequence from pre-tRNA to produce the mature 5'-terminus. It can also cleave other RNA substrates such as 4.5S RNA. The protein component plays an auxiliary but essential role in vivo by binding to the 5'-leader sequence and broadening the substrate specificity of the ribozyme. The protein is Ribonuclease P protein component of Blochmanniella floridana.